The chain runs to 345 residues: Transcription factor STKL1 (345 aa).

The disordered stretch occupies residues 1–145 (MASLENPAID…KKGHAQRVWS (145 aa)). The segment covering 11-22 (SSSEFESSSEEI) has biased composition (low complexity). Over residues 23–32 (SSSKESKPKE) the composition is skewed to basic and acidic residues. Residues 37-46 (VPSTKTLNSP) are compositionally biased toward polar residues. Ser-105 is subject to Phosphoserine. Over residues 114–137 (RASEGTTSRDMHVKRIKKEGDNKK) the composition is skewed to basic and acidic residues.

Belongs to the GeBP family. Expressed strongly in leaves and flowers, weakly in roots, and very weakly in stems.

Its subcellular location is the nucleus. In terms of biological role, transcription repressor that binds DNA in a sequence-specific manner, 5'-GCCT-3', to regulate the expression of PGR. Acts as a modulatory component for the glucose-triggered developmental leaf growth process. This chain is Transcription factor STKL1, found in Arabidopsis thaliana (Mouse-ear cress).